The sequence spans 4043 residues: Hybrid PKS-NRPS synthetase thnA (4043 aa).

The Ketosynthase family 3 (KS3) domain maps to 6 to 440 (LEPIAIVGSA…GSNAHAILEE (435 aa)). Residues C179, H319, and H360 each act as for beta-ketoacyl synthase activity in the active site. The malonyl-CoA:ACP transacylase (MAT) domain stretch occupies residues 558–894 (VFTGQGAQWA…FSDALGFVWT (337 aa)). The tract at residues 952–1090 (HEILGTILPE…ATVKIILGTP (139 aa)) is N-terminal hotdog fold. The segment at 952–1256 (HEILGTILPE…LSIKTFAPAT (305 aa)) is dehydratase (DH) domain. Positions 952-1258 (HEILGTILPE…IKTFAPATQA (307 aa)) constitute a PKS/mFAS DH domain. The active-site Proton acceptor; for dehydratase activity is the H984. The segment at 1105 to 1258 (LFPIDADRFY…IKTFAPATQA (154 aa)) is C-terminal hotdog fold. D1166 (proton donor; for dehydratase activity) is an active-site residue. Residues 1417–1591 (LASMMKQITH…RKAGFAGVDA (175 aa)) are methyltransferase (MT) domain. The interval 2146–2320 (TYLLVGLTGK…GSTFDIGQVA (175 aa)) is ketoreductase (KR) domain. The Carrier 1 domain maps to 2434–2512 (EQALDILKEC…ELCDRVVDKL (79 aa)). S2472 bears the O-(pantetheine 4'-phosphoryl)serine mark. Residues 2521-2618 (GKQGESQPPA…PPPPEPAVER (98 aa)) are disordered. A compositionally biased stretch (low complexity) spans 2527–2536 (QPPASTAQPQ). The segment covering 2537–2547 (PVAPKPKPLPV) has biased composition (pro residues). Residues 2578-2605 (YSATEASTRSGSPSEATRLSQKVSSKLQ) show a composition bias toward polar residues. The interval 2626 to 3067 (IKSVPISLGQ…IPRFSEKQLA (442 aa)) is condensation (C) domain. Residues 3092 to 3496 (QVARENPDKV…GTMVFHSRMA (405 aa)) form an adenylation (A) domain region. One can recognise a Carrier 2 domain in the interval 3614-3695 (TELTETMIQL…EMAQKVEETI (82 aa)). At S3655 the chain carries O-(pantetheine 4'-phosphoryl)serine. Positions 3736–3954 (ITGATGFLSK…DMLPAVLTAQ (219 aa)) are reductase (R) domain.

In the C-terminal section; belongs to the NRP synthetase family.

It carries out the reaction malate + 6 malonyl-CoA + acetyl-CoA + 2 AH2 + 2 S-adenosyl-L-methionine + 5 NADPH + 9 H(+) = trihazone A + 2 A + 2 S-adenosyl-L-homocysteine + 6 CO2 + 5 NADP(+) + 7 CoA + 6 H2O. It functions in the pathway secondary metabolite biosynthesis. Hybrid PKS-NRPS synthetase; part of the gene cluster that produces the tetronate natural products trihazones. The PKS-NRPS synthetase thnA with the help of the trans-enoyl reductase thnE are responsible for the synthesis of the carboxylmethyl containing trihazone A. The PKS portion of thnA synthesizes beta-keto-triene chain from one acetyl-CoA and 6 equivalents of malonyl-CoA, in collaboration with thnE, which selectively reduces the enoyl intermediate during the first and fourth iteration of the PKS. The NRPS domain selects and activates malate, of which the alpha-hydroxyl group attacks the completed polyketide acyl-S-ACP chain to form the ester product. Intramolecular Dieckmann cyclization catalyzed by the terminal reductase domain releases the product as trihazone A from the PKS-NPRS. The pathway begins with the formation of trihazone A by the hybrid PKS-NRPS synthetase thnA and the trans-enoyl reductase thnE. Trihazone A is further decarboxylated by the 2-oxoglutarate-dependent dioxygenase thnC to produce trihazone D. The function of the FAD-dependent monooxygenase thnD has still to be identified. This is Hybrid PKS-NRPS synthetase thnA from Trichoderma harzianum (Hypocrea lixii).